The primary structure comprises 66 residues: Large ribosomal subunit protein bL35 (66 aa).

Over residues 1 to 26 the composition is skewed to basic residues; sequence MPKMKTHRGSAKRFKKTASGKLKRGH. The interval 1 to 29 is disordered; that stretch reads MPKMKTHRGSAKRFKKTASGKLKRGHAYT.

It belongs to the bacterial ribosomal protein bL35 family.

In Geobacillus kaustophilus (strain HTA426), this protein is Large ribosomal subunit protein bL35.